The primary structure comprises 494 residues: NADH-quinone oxidoreductase subunit N (494 aa).

14 helical membrane passes run 13–33 (LIAL…MLAI), 43–63 (FVLT…AMGV), 82–102 (MALV…YLGG), 117–137 (LLIL…HLVG), 138–158 (LFIG…YAFF), 169–189 (YMVL…LLYA), 209–229 (LLVE…LSLV), 243–263 (PAPV…AVLL), 277–297 (LNEL…LLAL), 311–331 (IAHF…AVEA), 332–352 (IGVY…VITL), 380–400 (AVLT…GFIG), 412–432 (QLWW…FYYL), and 461–481 (IMLL…QPLL).

Belongs to the complex I subunit 2 family. NDH-1 is composed of 13 different subunits. Subunits NuoA, H, J, K, L, M, N constitute the membrane sector of the complex.

The protein resides in the cell inner membrane. It carries out the reaction a quinone + NADH + 5 H(+)(in) = a quinol + NAD(+) + 4 H(+)(out). In terms of biological role, NDH-1 shuttles electrons from NADH, via FMN and iron-sulfur (Fe-S) centers, to quinones in the respiratory chain. The immediate electron acceptor for the enzyme in this species is believed to be ubiquinone. Couples the redox reaction to proton translocation (for every two electrons transferred, four hydrogen ions are translocated across the cytoplasmic membrane), and thus conserves the redox energy in a proton gradient. This Ectopseudomonas mendocina (strain ymp) (Pseudomonas mendocina) protein is NADH-quinone oxidoreductase subunit N.